Consider the following 345-residue polypeptide: Phosphoribosylformylglycinamidine cyclo-ligase (345 aa).

Belongs to the AIR synthase family.

It is found in the cytoplasm. The catalysed reaction is 2-formamido-N(1)-(5-O-phospho-beta-D-ribosyl)acetamidine + ATP = 5-amino-1-(5-phospho-beta-D-ribosyl)imidazole + ADP + phosphate + H(+). It functions in the pathway purine metabolism; IMP biosynthesis via de novo pathway; 5-amino-1-(5-phospho-D-ribosyl)imidazole from N(2)-formyl-N(1)-(5-phospho-D-ribosyl)glycinamide: step 2/2. In Shewanella baltica (strain OS185), this protein is Phosphoribosylformylglycinamidine cyclo-ligase.